The primary structure comprises 470 residues: SHUGOSHIN 2 (470 aa).

A coiled-coil region spans residues 72 to 113; it reads IQKLRINLRSVQEKNLQLAQANSQMLAELNTNRDRLKDLQHE. Basic and acidic residues-rich tracts occupy residues 131 to 143 and 150 to 162; these read VLPR…KDKV and GDCK…DIKH. 2 disordered regions span residues 131-176 and 358-470; these read VLPR…IKSS and ESAG…RRKC. Positions 163 to 172 are enriched in basic residues; the sequence is KDTKRKRTTR. Residues 370 to 381 are compositionally biased toward basic and acidic residues; sequence SESRHETKEITR. A compositionally biased stretch (basic residues) spans 382–392; it reads KRSFSTRRQST. Basic and acidic residues-rich tracts occupy residues 396–406, 423–438, and 449–462; these read SQTDEAIKEIA, TESK…EGMT, and HAAE…EVSL.

This sequence belongs to the shugoshin family.

In terms of biological role, dispensable for both meiotic and mitotic cell cycle progression. Required with SGO1 for full protection of centromeric cohesion during anaphase I. Required to prevent precocious release of pericentromeric cohesins during meiosis. Acts redundantly to SGO1. The chain is SHUGOSHIN 2 from Arabidopsis thaliana (Mouse-ear cress).